The following is a 391-amino-acid chain: MSEQTANKETRGFQSEVKQLLHLMIHSLYSNKEIFLRELISNASDASDKLRFKALSNGDLYEGNADLGVKLSFNEAANTLTISDNGIGMSREDVIEHLGTIAKSGTADFFSKLSEDQSKDSQLIGQFGVGFYSAFIVADAVTVRTRAAGSEKDQGVQWHSEGEGDYTIEDITKESRGTDIILHMREEGKEFLNEWRLKEVIGKYSDHIGIPVSIWAVEKDEEGKDKEGKWEQVNKAQALWTRSKSDIEDAEYQEFYKHVSHDFADPLTWSHNKVEGKNDYTSLLYIPAKAPFDMMNRDHKSGLKLYVQRVFIMDDAEQFMPTYLRFVKGLIDSNDLPLNVSREILQDNKVTQSLRSACTKRVLGMLEKMAKKDDEKYLTFWKQFGQVLKEG.

This sequence belongs to the heat shock protein 90 family. In terms of assembly, homodimer.

Its subcellular location is the cytoplasm. In terms of biological role, molecular chaperone. Has ATPase activity. The protein is Chaperone protein HtpG (htpG) of Aliivibrio fischeri (Vibrio fischeri).